The sequence spans 327 residues: Ribose-phosphate pyrophosphokinase (327 aa).

ATP-binding positions include 40 to 42 and 99 to 100; these read DGE and RQ. His-134 and Asp-173 together coordinate Mg(2+). The active site involves Lys-196. Residues Arg-198, Asp-222, and 226-230 contribute to the D-ribose 5-phosphate site; that span reads DTANT.

This sequence belongs to the ribose-phosphate pyrophosphokinase family. Class I subfamily. In terms of assembly, homohexamer. The cofactor is Mg(2+).

The protein resides in the cytoplasm. The catalysed reaction is D-ribose 5-phosphate + ATP = 5-phospho-alpha-D-ribose 1-diphosphate + AMP + H(+). The protein operates within metabolic intermediate biosynthesis; 5-phospho-alpha-D-ribose 1-diphosphate biosynthesis; 5-phospho-alpha-D-ribose 1-diphosphate from D-ribose 5-phosphate (route I): step 1/1. Functionally, involved in the biosynthesis of the central metabolite phospho-alpha-D-ribosyl-1-pyrophosphate (PRPP) via the transfer of pyrophosphoryl group from ATP to 1-hydroxyl of ribose-5-phosphate (Rib-5-P). This is Ribose-phosphate pyrophosphokinase from Chromobacterium violaceum (strain ATCC 12472 / DSM 30191 / JCM 1249 / CCUG 213 / NBRC 12614 / NCIMB 9131 / NCTC 9757 / MK).